The sequence spans 671 residues: MANPNNNNDNKQNNNNNFFNDNPLLAFAIFSIVIILIFKSFVGEGESLGTMMNTQGVAQTKQVKYSEIKKRIEEGAVKSVKLTPSMVEAIIEDNGRKVRYVAQNVPTYDRDLIPLLDKKKISYEGVVGNGFFSELISMMLPILIFFAIWIFLAKKMSKGMGGGILGAGKADKLINSEKPDTRFDDVQGVEEAKDEVKEIVDFLKFPERYIELGAKIPKGVLLVGPPGTGKTLLAKAVAGEASVPFFSVSGSGFIEMFVGVGASRVRDLFAQAKKEAPSIIFIDEIDAIGKSRASGGQMGGNDEREQTLNQLLAEMDGFGTDTPVIVLAATNRPETLDAALLRAGRFDRQVLVDKPDFEGRLAILKVHSKDVKLAPNVDLEIVAKQTAGLAGADLANIINEAALLAGRQNKKQIEQSDLLEAIERSFVGLEKKNRKINETEKKIVAYHESGHALMSELSEGATRVTKVSIIPRGLGALGYTLHLPEDEERFLKQKHELMAEVDVLLGGRAAEDVFIGEISTGAGNDLDRATAILKDMVSVYGMTDVAGLMVLSRSQNSFLGAGAVSTDYSDKTAEAMDSYIKSTLNERYGYVKETLQNYYGAIDNMAKELLGTEVIEGKTVRRIIEEYEQEKGMPSRLAHKDKVAKNKAEADKKEEALKKEISEESDNNKEA.

Over 1–22 the chain is Cytoplasmic; that stretch reads MANPNNNNDNKQNNNNNFFNDN. A helical transmembrane segment spans residues 23–43; that stretch reads PLLAFAIFSIVIILIFKSFVG. The Periplasmic segment spans residues 44-130; the sequence is EGESLGTMMN…ISYEGVVGNG (87 aa). A helical transmembrane segment spans residues 131 to 151; sequence FFSELISMMLPILIFFAIWIF. Over 152 to 671 the chain is Cytoplasmic; that stretch reads LAKKMSKGMG…SEESDNNKEA (520 aa). 224–231 serves as a coordination point for ATP; it reads GPPGTGKT. Histidine 447 contacts Zn(2+). Residue glutamate 448 is part of the active site. Zn(2+) is bound by residues histidine 451 and aspartate 525. Positions 630-671 are disordered; the sequence is EKGMPSRLAHKDKVAKNKAEADKKEEALKKEISEESDNNKEA.

In the central section; belongs to the AAA ATPase family. This sequence in the C-terminal section; belongs to the peptidase M41 family. In terms of assembly, homohexamer. Requires Zn(2+) as cofactor.

Its subcellular location is the cell inner membrane. Functionally, acts as a processive, ATP-dependent zinc metallopeptidase for both cytoplasmic and membrane proteins. Plays a role in the quality control of integral membrane proteins. This Sulfurovum sp. (strain NBC37-1) protein is ATP-dependent zinc metalloprotease FtsH.